The following is a 55-amino-acid chain: uncharacterized protein (55 aa).

Positions 1-22 are disordered; sequence MPALKSHVRPNSAAPARRQPWP.

This is an uncharacterized protein from Rhodobacter capsulatus (Rhodopseudomonas capsulata).